The sequence spans 897 residues: DNA endonuclease RBBP8 (897 aa).

Positions 22–45 are essential for binding to the MRN complex and for RPA focus formation on DNA damage; that stretch reads DLWTKLKECHDREVQGLQVKVTKL. Residues 35–84 adopt a coiled-coil conformation; sequence VQGLQVKVTKLKQERILDAQRLEEFFTKNQQLREQQKVLHETIKVLEDRL. The required for interaction with LMO4, probably by stabilizing the interaction through RPPB8 dimerization stretch occupies residues 45 to 160; that stretch reads LKQERILDAQ…AELECEEDVI (116 aa). Glycyl lysine isopeptide (Lys-Gly) (interchain with G-Cter in SUMO2) cross-links involve residues Lys-62 and Lys-115. Positions 117 to 138 form a coiled coil; that stretch reads ITELMNERNTLQEENKKLSEQL. Lys-193 is covalently cross-linked (Glycyl lysine isopeptide (Lys-Gly) (interchain with G-Cter in SUMO2)). Ser-233 and Ser-276 each carry phosphoserine. Basic and acidic residues predominate over residues 292-307; sequence KQPFEESTRNTEDSLR. Residues 292–325 are disordered; sequence KQPFEESTRNTEDSLRFSDSTSKTPPQEELPTRV. Residue Thr-315 is modified to Phosphothreonine; by CDK2. Residues Ser-326, Ser-327, and Ser-349 each carry the phosphoserine modification. Residues Lys-360 and Lys-378 each participate in a glycyl lysine isopeptide (Lys-Gly) (interchain with G-Cter in SUMO2) cross-link. The residue at position 379 (Ser-379) is a Phosphoserine. Glycyl lysine isopeptide (Lys-Gly) (interchain with G-Cter in SUMO2) cross-links involve residues Lys-396, Lys-404, and Lys-410. The interval 419–464 is disordered; sequence QNRTEYGKDSNTDKHLEPLKSLGGRTSKRKKTEEESEHEVSCPQAS. A compositionally biased stretch (basic and acidic residues) spans 420–436; the sequence is NRTEYGKDSNTDKHLEP. Residues Lys-438 and Lys-449 each participate in a glycyl lysine isopeptide (Lys-Gly) (interchain with G-Cter in SUMO2) cross-link. The PXDLS motif signature appears at 490–494; the sequence is PLDLS. Positions 509 to 557 are damage-recruitment motif; it reads SETSKNKFRQVTLYEALKTIPKGFSSSRKASDGNCTLPKDSPGEPCSQE. Lys-526 participates in a covalent cross-link: Glycyl lysine isopeptide (Lys-Gly) (interchain with G-Cter in SUMO2); alternate. Residues Lys-530, Lys-572, and Lys-578 each participate in a glycyl lysine isopeptide (Lys-Gly) (interchain with G-Cter in SUMO2) cross-link. A Glycyl lysine isopeptide (Lys-Gly) (interchain with G-Cter in SUMO2); alternate cross-link involves residue Lys-604. Glycyl lysine isopeptide (Lys-Gly) (interchain with G-Cter in SUMO2) cross-links involve residues Lys-613, Lys-638, and Lys-640. Residues 641 to 685 form a required for interaction with LMO4, probably by making physical contact with LMO4 region; that stretch reads SLQNNQDVSFENIQWSIDPGADLSQYKMDVTVIDTKDGSQSKLGG. Residue Ser-664 is modified to Phosphoserine; by ATM. Residue Lys-676 forms a Glycyl lysine isopeptide (Lys-Gly) (interchain with G-Cter in SUMO2) linkage. Ser-679 is modified (phosphoserine). A disordered region spans residues 704–723; the sequence is KKQEQKGEKSSNEERKMNDS. Lys-719 is covalently cross-linked (Glycyl lysine isopeptide (Lys-Gly) (interchain with G-Cter in SUMO2)). Residue Ser-723 is modified to Phosphoserine. Ser-745 is subject to Phosphoserine; by ATM. A Glycyl lysine isopeptide (Lys-Gly) (interchain with G-Cter in SUMO2) cross-link involves residue Lys-782. Residues 840–842 carry the KLHL15-binding motif; it reads FRY. Residue Thr-847 is modified to Phosphothreonine; by CDK1. Thr-859 carries the phosphothreonine; by ATR modification. Lys-869 participates in a covalent cross-link: Glycyl lysine isopeptide (Lys-Gly) (interchain with G-Cter in SUMO2). Positions 873–897 are disordered; the sequence is DPCPRPKRRQPYNAIFSPKGKEQKT.

Belongs to the COM1/SAE2/CtIP family. Homotetramer; formed by antiparallel association of helical extensions protruding from the N-termini of two parallel coiled-coil dimers. Forms a dumbbell-shaped particle in which polar globular domains are held about 30 nm apart by a central rod. Homotetramerization is required for DNA-end resection and repair. Interacts (via the PXDLS motif) with CTBP1; the interaction is disrupted via binding of the adenovirus E1A to CTBP1. Component of the BRCA1-RBBP8 complex. Interacts (the Ser-327 phosphorylated form) with BRCA1 (via the C-terminal BRCT domains): the interaction occurs in the G2 phase, ubiquitinates RBBP8 and involves RBBP8 in BRCA1-dependent G2/M checkpoint control on DNA damage. Interacts with RB1. Interacts with the MRN complex; interacts directly with MRE11; the interaction is required for efficient homologous recombination (HR) and regulation of the MRN complex. Interacts directly with RAD50. Interacts (when phosphorylated by CDK1) with NBN; promoting association with the MRN complex. Interacts with LM04 (via the LIM zinc-binding 1 domain). Interacts with SIAH1. Interacts with RNF138. Interacts with EXD2. Interacts with CUL3 and KLHL15; this interaction leads to RBBP8 proteasomal degradation. Directly interacts with PIN1; this interaction depends upon RBBP8 phosphorylation, predominantly at Thr-315. Interacts with FZR1; this interaction leads to APC/C-mediated RBBP8 proteasomal degradation. Interacts with AUNIP; leading to recruitment of RBBP8 to sites of DNA damage. Interacts with SAMHD1. Interacts with HDGFL2. In terms of processing, hyperphosphorylation upon ionizing radiation results in dissociation from BRCA1. Phosphorylation at Thr-847 by CDK1 is essential for the recruitment to DNA and the DNA repair function. Phosphorylation at Thr-847 and Thr-859 promote interaction with NBN and recruitment to double-strand breaks (DSBs). Phosphorylated on Ser-327 as cells enter G2 phase. This phosphorylation is required for binding BRCA1 and for the G2/M DNA damage transition checkpoint control. Phosphorylation at Thr-315, probably catalyzed by CDK2, is required for PIN1-binding, while phosphorylation at Ser-276 serves as a PIN1 isomerization site. Phosphorylation at Thr-315 is cell-cycle dependent. It steadily increases during S phase, peaks at late S/G2 phase, and drops at G1. Phosphorylation is not required for tetramerization. Binds to DNA more strongly when dephosphorylated. Ubiquitinated. Ubiquitination at multiple sites by BRCA1 (via its N-terminal RING domain) does not lead to its proteasomal degradation but instead the ubiquitinated RBBP8 binds to chromatin following DNA damage and may play a role in G2/M checkpoint control. Ubiquitinated by RNF138 at its N-terminus. Ubiquitinated through 'Lys-48' by the E3 CUL3-KLHL15 complex; this modification leads to proteasomal degradation. Ubiquitinated by the E3 FZR1/APC/C complex; this modification leads to proteasomal degradation. In terms of tissue distribution, expressed in ER-positive breast cancer lines, but tends to be down-regulated ER-negative cells (at protein level).

It is found in the nucleus. The protein resides in the chromosome. Its function is as follows. Endonuclease that cooperates with the MRE11-RAD50-NBN (MRN) complex in DNA-end resection, the first step of double-strand break (DSB) repair through the homologous recombination (HR) pathway. HR is restricted to S and G2 phases of the cell cycle and preferentially repairs DSBs resulting from replication fork collapse. Key determinant of DSB repair pathway choice, as it commits cells to HR by preventing classical non-homologous end-joining (NHEJ). Specifically promotes the endonuclease activity of the MRN complex to clear DNA ends containing protein adducts: recruited to DSBs by NBN following phosphorylation by CDK1, and promotes the endonuclease activity of MRE11 to clear protein-DNA adducts and generate clean double-strand break ends. Functions downstream of the MRN complex and ATM, promotes ATR activation and its recruitment to DSBs in the S/G2 phase facilitating the generation of ssDNA. Component of the BRCA1-RBBP8 complex that regulates CHEK1 activation and controls cell cycle G2/M checkpoints on DNA damage. During immunoglobulin heavy chain class-switch recombination, promotes microhomology-mediated alternative end joining (A-NHEJ) and plays an essential role in chromosomal translocations. Binds preferentially to DNA Y-junctions and to DNA substrates with blocked ends and promotes intermolecular DNA bridging. The sequence is that of DNA endonuclease RBBP8 (RBBP8) from Homo sapiens (Human).